Reading from the N-terminus, the 339-residue chain is Biotin synthase (339 aa).

The 219-residue stretch at 53 to 271 (NAIQMSRLLS…IALARILMPR (219 aa)) folds into the Radical SAM core domain. 3 residues coordinate [4Fe-4S] cluster: Cys-68, Cys-72, and Cys-75. Positions 112, 143, 203, and 275 each coordinate [2Fe-2S] cluster.

The protein belongs to the radical SAM superfamily. Biotin synthase family. As to quaternary structure, homodimer. The cofactor is [4Fe-4S] cluster. Requires [2Fe-2S] cluster as cofactor.

The catalysed reaction is (4R,5S)-dethiobiotin + (sulfur carrier)-SH + 2 reduced [2Fe-2S]-[ferredoxin] + 2 S-adenosyl-L-methionine = (sulfur carrier)-H + biotin + 2 5'-deoxyadenosine + 2 L-methionine + 2 oxidized [2Fe-2S]-[ferredoxin]. It participates in cofactor biosynthesis; biotin biosynthesis; biotin from 7,8-diaminononanoate: step 2/2. Catalyzes the conversion of dethiobiotin (DTB) to biotin by the insertion of a sulfur atom into dethiobiotin via a radical-based mechanism. The protein is Biotin synthase of Agrobacterium fabrum (strain C58 / ATCC 33970) (Agrobacterium tumefaciens (strain C58)).